The following is a 415-amino-acid chain: MFADLDYDIEEDKLGIPTVPGKVTLQKDAQNLIGISIGGGAQYCPCLYIVQVFDNTPAALDGTVAAGDEITGVNGRSIKGKTKVEVAKMIQEVKGEVTIHYNKLQADPKQGMSLDIVLKKVKHRLVENMSSGTADALGLSRAILCNDGLVKRLEELERTAELYKGMTEHTKNLLRVFYELSQTHRAFGDVFSVIGVREPQPAASEAFVKFADAHRSIEKFGIRLLKTIKPMLTDLNTYLNKAIPDTRLTIKKYLDVKFEYLSYCLKVKEMDDEEYSCIALGEPLYRVSTGNYEYRLILRCRQEARARFSQMRKDVLEKMELLDQKHVQDIVFQLQRLVSTMSKYYNDCYAVLRDADVFPIEVDLAHTTLAYGLNQEEFTDGEEEEEEEDTAAGEPSRDTRGAAGPLDKGGSWCDS.

The 84-residue stretch at 22–105 (KVTLQKDAQN…EVTIHYNKLQ (84 aa)) folds into the PDZ domain. C44 and C46 together coordinate Zn(2+). Position 82 is a phosphothreonine (T82). The region spanning 144 to 357 (LCNDGLVKRL…CYAVLRDADV (214 aa)) is the AH domain. Residues 376–415 (EEFTDGEEEEEEEDTAAGEPSRDTRGAAGPLDKGGSWCDS) form a disordered region. Over residues 377–391 (EFTDGEEEEEEEDTA) the composition is skewed to acidic residues. A lipid anchor (S-palmitoyl cysteine; by DHHC8) is attached at C413.

Monomer and homodimer. Interacts with CXADR. Interacts presynaptically with the glutamate receptors GRIA2, GRIA3, GRIK3, isoform 3 of GRIA4, isoform A of GRM4, GRM7 and GRM8; with NAPA and NAPB; and with BTG2. The interaction with NAPA and NAPB disrupts the interaction with GRIA2, conducting to the internalization of GRIA2. Interacts with PRKCA; with the amine transporters SLC6A2 and SLC6A3; with the channels ASIC1 and ASIC2; with the GTP-binding proteins ARF1 and ARF3; with the ephrin receptor tyrosine kinases EPHA7, EPHB1 and EPHB2; with ERBB2 and through its PDZ domain with the C-terminal tail of PRLHR. Interacts with UNC5A. Interacts (via AH domain) with NCS1/FREQ; in a calcium-dependent manner. Interacts with F-actin and associates with the ARP2/3 complex. Interacts (via PDZ domain) with ARF1 (activated); the interaction blocks Arp2/3 complex inhibition. Interacts with SORCS3. Phosphorylation at Thr-82 appears to inhibit the interaction with AMPA receptors. Post-translationally, palmitoylation on Cys-413 is essential for long-term synaptic depression (LTD).

It localises to the cytoplasm. The protein resides in the perinuclear region. It is found in the membrane. The protein localises to the postsynaptic density. Its subcellular location is the synapse. It localises to the synaptosome. The protein resides in the cytoskeleton. Functionally, probable adapter protein that bind to and organize the subcellular localization of a variety of membrane proteins containing some PDZ recognition sequence. Involved in the clustering of various receptors, possibly by acting at the receptor internalization level. Plays a role in synaptic plasticity by regulating the trafficking and internalization of AMPA receptors. May be regulated upon PRKCA activation. May regulate ASIC1/ASIC3 channel. Regulates actin polymerization by inhibiting the actin-nucleating activity of the Arp2/3 complex; the function is competitive with nucleation promoting factors and is linked to neuronal morphology regulation and AMPA receptor (AMPAR) endocytosis. Via interaction with the Arp2/3 complex involved in regulation of synaptic plasicity of excitatory synapses and required for spine shrinkage during long-term depression (LTD). Involved in regulation of astrocyte morphology, antagonistic to Arp2/3 complex activator WASL/N-WASP function. In Macaca fascicularis (Crab-eating macaque), this protein is PRKCA-binding protein (PICK1).